The following is a 331-amino-acid chain: D-alanine--D-alanine ligase (331 aa).

In terms of domain architecture, ATP-grasp spans 121–327 (KLWYDALGIP…FSQFLENCVR (207 aa)). 151 to 206 (AFESWGKVFVKAARQGSSVGCYQVNQVEELSEAINKAFTFSDQVLIEKSVVPRELE) serves as a coordination point for ATP. Mg(2+)-binding residues include aspartate 281, glutamate 294, and asparagine 296.

It belongs to the D-alanine--D-alanine ligase family. Mg(2+) is required as a cofactor. It depends on Mn(2+) as a cofactor.

The protein resides in the cytoplasm. The enzyme catalyses 2 D-alanine + ATP = D-alanyl-D-alanine + ADP + phosphate + H(+). It functions in the pathway cell wall biogenesis; peptidoglycan biosynthesis. In terms of biological role, cell wall formation. This Vibrio atlanticus (strain LGP32) (Vibrio splendidus (strain Mel32)) protein is D-alanine--D-alanine ligase.